A 93-amino-acid polypeptide reads, in one-letter code: Integration host factor subunit beta (93 aa).

Belongs to the bacterial histone-like protein family. Heterodimer of an alpha and a beta chain.

Its function is as follows. This protein is one of the two subunits of integration host factor, a specific DNA-binding protein that functions in genetic recombination as well as in transcriptional and translational control. The polypeptide is Integration host factor subunit beta (Tolumonas auensis (strain DSM 9187 / NBRC 110442 / TA 4)).